The primary structure comprises 548 residues: CTL-like protein DDB_G0288717 (548 aa).

A disordered region spans residues 1 to 44 (MWAPEEDYKQPLLTNSRVANNGNNNNSNGRGGSSSPSTRLQPEH). An N-linked (GlcNAc...) asparagine glycan is attached at Asn25. The helical transmembrane segment at 52–72 (ILFTILFLLVIGGMAAISGIA) threads the bilayer. An N-linked (GlcNAc...) asparagine glycan is attached at Asn97. A run of 4 helical transmembrane segments spans residues 125-145 (DILI…IQLL), 151-171 (FFIY…GGLF), 184-204 (MIVG…IVYL), and 226-246 (PSVF…IAYW). N-linked (GlcNAc...) asparagine glycosylation is present at Asn273. The next 2 membrane-spanning stretches (helical) occupy residues 290–310 (NLMY…SAVF) and 350–370 (FGSL…AFML). Asn377 carries N-linked (GlcNAc...) asparagine glycosylation. Transmembrane regions (helical) follow at residues 381–401 (KLVV…ESIV), 442–462 (FIGG…SALF), and 479–499 (IALS…IVGI). Asn544 carries N-linked (GlcNAc...) asparagine glycosylation.

This sequence belongs to the CTL (choline transporter-like) family.

Its subcellular location is the membrane. This is CTL-like protein DDB_G0288717 from Dictyostelium discoideum (Social amoeba).